The following is a 382-amino-acid chain: 1-deoxy-D-xylulose 5-phosphate reductoisomerase (382 aa).

Residues Thr-10, Gly-11, Ser-12, Ile-13, Gly-36, and Asn-122 each coordinate NADPH. Residue Lys-123 participates in 1-deoxy-D-xylulose 5-phosphate binding. An NADPH-binding site is contributed by Glu-124. Asp-148 is a Mn(2+) binding site. 1-deoxy-D-xylulose 5-phosphate is bound by residues Ser-149, Glu-150, Ser-174, and His-197. Position 150 (Glu-150) interacts with Mn(2+). Gly-203 provides a ligand contact to NADPH. 1-deoxy-D-xylulose 5-phosphate-binding residues include Ser-210, Asn-215, Lys-216, and Glu-219. A Mn(2+)-binding site is contributed by Glu-219.

It belongs to the DXR family. The cofactor is Mg(2+). Mn(2+) serves as cofactor.

It catalyses the reaction 2-C-methyl-D-erythritol 4-phosphate + NADP(+) = 1-deoxy-D-xylulose 5-phosphate + NADPH + H(+). It functions in the pathway isoprenoid biosynthesis; isopentenyl diphosphate biosynthesis via DXP pathway; isopentenyl diphosphate from 1-deoxy-D-xylulose 5-phosphate: step 1/6. In terms of biological role, catalyzes the NADPH-dependent rearrangement and reduction of 1-deoxy-D-xylulose-5-phosphate (DXP) to 2-C-methyl-D-erythritol 4-phosphate (MEP). This chain is 1-deoxy-D-xylulose 5-phosphate reductoisomerase, found in Chlorobium phaeobacteroides (strain BS1).